The chain runs to 290 residues: Sodium/potassium-transporting ATPase subunit beta-2 (290 aa).

The Cytoplasmic segment spans residues 1–39; the sequence is MVIQKEKKSCGQVVEEWKEFVWNPRTHQFMGRTGTSWAF. Residues 40-67 traverse the membrane as a helical; Signal-anchor for type II membrane protein segment; that stretch reads ILLFYLVFYGFLTAMFTLTMWVMLQTVS. At 68-290 the chain is on the extracellular side; the sequence is DHTPKYQDRL…VAFKLRINKA (223 aa). N-linked (GlcNAc...) asparagine glycans are attached at residues Asn96 and Asn118. A disulfide bridge connects residues Cys129 and Cys150. N-linked (GlcNAc...) asparagine glycosylation is found at Asn153 and Asn159. Cys160 and Cys177 are disulfide-bonded. 3 N-linked (GlcNAc...) asparagine glycosylation sites follow: Asn193, Asn197, and Asn238. Residues 193–290 are immunoglobulin-like; it reads NQSMNVTCVG…VAFKLRINKA (98 aa). The cysteines at positions 200 and 261 are disulfide-linked.

Belongs to the X(+)/potassium ATPases subunit beta family. The sodium/potassium-transporting ATPase is composed of a catalytic alpha subunit, an auxiliary non-catalytic beta subunit and an additional regulatory subunit. Interacts with isoform 2 of BSG. Highly expressed in brain (at protein level).

It is found in the cell membrane. Functionally, this is the non-catalytic component of the active enzyme, which catalyzes the hydrolysis of ATP coupled with the exchange of Na(+) and K(+) ions across the plasma membrane. The exact function of the beta-2 subunit is not known. In terms of biological role, mediates cell adhesion of neurons and astrocytes, and promotes neurite outgrowth. This Rattus norvegicus (Rat) protein is Sodium/potassium-transporting ATPase subunit beta-2 (Atp1b2).